The chain runs to 308 residues: Aspartate carbamoyltransferase catalytic subunit (308 aa).

Arg-51 and Thr-52 together coordinate carbamoyl phosphate. Lys-79 provides a ligand contact to L-aspartate. 3 residues coordinate carbamoyl phosphate: Arg-101, His-130, and Gln-133. Residues Arg-163 and Arg-215 each coordinate L-aspartate. Carbamoyl phosphate-binding residues include Ala-258 and Pro-259.

Belongs to the aspartate/ornithine carbamoyltransferase superfamily. ATCase family. Heterododecamer (2C3:3R2) of six catalytic PyrB chains organized as two trimers (C3), and six regulatory PyrI chains organized as three dimers (R2).

The enzyme catalyses carbamoyl phosphate + L-aspartate = N-carbamoyl-L-aspartate + phosphate + H(+). It participates in pyrimidine metabolism; UMP biosynthesis via de novo pathway; (S)-dihydroorotate from bicarbonate: step 2/3. In terms of biological role, catalyzes the condensation of carbamoyl phosphate and aspartate to form carbamoyl aspartate and inorganic phosphate, the committed step in the de novo pyrimidine nucleotide biosynthesis pathway. The sequence is that of Aspartate carbamoyltransferase catalytic subunit from Pediococcus pentosaceus (strain ATCC 25745 / CCUG 21536 / LMG 10740 / 183-1w).